Reading from the N-terminus, the 134-residue chain is Lymphocyte antigen 6I (134 aa).

A signal peptide spans 1-21 (MDTSHAIKSCVLILLVTLLCA). The UPAR/Ly6 domain maps to 27-105 (LECYQCYGVP…ISCCQEDLCN (79 aa)). Disulfide bonds link Cys-29/Cys-53, Cys-32/Cys-41, Cys-46/Cys-74, Cys-78/Cys-98, and Cys-99/Cys-104. N-linked (GlcNAc...) asparagine glycosylation occurs at Asn-95. A lipid anchor (GPI-anchor amidated glycine) is attached at Gly-112. A propeptide spans 113–134 (SSWTTAGVLLFSLGSVLLQTLM) (removed in mature form).

In terms of tissue distribution, expressed in hematopoietic tissue (spleen, thymus, bone marrow). Also found in peritoneal macrophages, peripheral blood leukocytes, liver, heart, brain, kidney and lung.

It localises to the cell membrane. This is Lymphocyte antigen 6I (Ly6i) from Mus musculus (Mouse).